Reading from the N-terminus, the 611-residue chain is Chaperone protein DnaK (611 aa).

At T173 the chain carries Phosphothreonine; by autocatalysis. Positions 579 to 592 (AAGQAEGAQGAQDA) are enriched in low complexity. The segment at 579 to 598 (AAGQAEGAQGAQDAGAKKDN) is disordered.

It belongs to the heat shock protein 70 family.

In terms of biological role, acts as a chaperone. The sequence is that of Chaperone protein DnaK from Bacillus cereus (strain AH187).